Reading from the N-terminus, the 492-residue chain is Bifunctional purine biosynthesis protein PurH (492 aa).

The region spanning 1–144 is the MGS-like domain; that stretch reads MKKAILSVSN…KNFKHVTTIV (144 aa).

This sequence belongs to the PurH family.

The enzyme catalyses (6R)-10-formyltetrahydrofolate + 5-amino-1-(5-phospho-beta-D-ribosyl)imidazole-4-carboxamide = 5-formamido-1-(5-phospho-D-ribosyl)imidazole-4-carboxamide + (6S)-5,6,7,8-tetrahydrofolate. It catalyses the reaction IMP + H2O = 5-formamido-1-(5-phospho-D-ribosyl)imidazole-4-carboxamide. The protein operates within purine metabolism; IMP biosynthesis via de novo pathway; 5-formamido-1-(5-phospho-D-ribosyl)imidazole-4-carboxamide from 5-amino-1-(5-phospho-D-ribosyl)imidazole-4-carboxamide (10-formyl THF route): step 1/1. Its pathway is purine metabolism; IMP biosynthesis via de novo pathway; IMP from 5-formamido-1-(5-phospho-D-ribosyl)imidazole-4-carboxamide: step 1/1. The sequence is that of Bifunctional purine biosynthesis protein PurH from Staphylococcus haemolyticus (strain JCSC1435).